The sequence spans 177 residues: Large ribosomal subunit protein uL6 (177 aa).

Belongs to the universal ribosomal protein uL6 family. In terms of assembly, part of the 50S ribosomal subunit.

Functionally, this protein binds to the 23S rRNA, and is important in its secondary structure. It is located near the subunit interface in the base of the L7/L12 stalk, and near the tRNA binding site of the peptidyltransferase center. This Aeromonas salmonicida (strain A449) protein is Large ribosomal subunit protein uL6.